Consider the following 263-residue polypeptide: Pheophorbidase (263 aa).

Positions 13 to 244 (HFVFVHGASH…LEESDHSAFF (232 aa)) constitute an AB hydrolase-1 domain. S88 (acyl-ester intermediate) is an active-site residue. Catalysis depends on charge relay system residues D212 and H240.

The protein belongs to the AB hydrolase superfamily. As to quaternary structure, homodimer.

The protein resides in the cytoplasm. The enzyme catalyses pheophorbide a + H2O + H(+) = pyropheophorbide a + methanol + CO2. Inhibited by methanol and phenylmethylsulfonicfluoride (PMSF). Its function is as follows. Involved in chlorophyll degradation. Specific for the pheophorbides of the dihydroporphyrin and tetrahydroporphyrin types. Chlorophyllide a, pheophytin a and the nonfluorescent chlorophyll catabolite (NCC) are not used as substrates. The protein is Pheophorbidase (PPD) of Raphanus sativus (Radish).